Reading from the N-terminus, the 386-residue chain is Innexin inx4 (386 aa).

Residues 1-21 (MLEFVRPLQSILQIKQVNSTD) are Cytoplasmic-facing. Residues 22-42 (LVWRLHCRVTVFLLLLASLLL) traverse the membrane as a helical segment. At 43–111 (SARQYFGNPI…ESERSYQKYY (69 aa)) the chain is on the extracellular side. Residues 112-132 (QWVVFILALQACMFSVPNFLW) traverse the membrane as a helical segment. Residues 133–187 (KAWEAGRLQSLCDGLTTPIVPDHWEKTRKKQLITYLSADFPRLHRTYLLRYCFCT) lie on the Cytoplasmic side of the membrane. A helical membrane pass occupies residues 188-208 (LLNFCNVLLNIFLVNVIFSGF). Residues 209–272 (WSNYHPAVKA…LNVVNEKIFA (64 aa)) are Extracellular-facing. Residues 273 to 293 (FIWLWFLGLLVISMLNLLFWI) form a helical membrane-spanning segment. At 294–386 (VVLCSKGFRL…DPEGYDEEGV (93 aa)) the chain is on the cytoplasmic side. The interval 358–386 (HNGHKTFRMPKGGEPDFYTDPEGYDEEGV) is disordered. Positions 374-386 (FYTDPEGYDEEGV) are enriched in acidic residues.

This sequence belongs to the pannexin family.

It is found in the cell membrane. The protein resides in the cell junction. The protein localises to the gap junction. Functionally, structural component of gap junctions. Required for normal development of ovary. Required for normal egg production after blood meal. Required for normal development of testis. In terms of biological role, (Microbial infection) Modulates the development of Plasmodium falciparum oocysts. The polypeptide is Innexin inx4 (Anopheles gambiae (African malaria mosquito)).